The sequence spans 64 residues: Antimicrobial peptide 1 (64 aa).

A signal peptide spans 1–26 (MAKVSSSLLKFAIVLILVLSMSAIIS). Cystine bridges form between Cys-29–Cys-46, Cys-36–Cys-50, and Cys-45–Cys-61.

Belongs to the AMP family.

It is found in the secreted. Functionally, possesses antifungal and antibacterial activity. In Mesembryanthemum crystallinum (Common ice plant), this protein is Antimicrobial peptide 1.